A 395-amino-acid polypeptide reads, in one-letter code: GPI-anchor transamidase (395 aa).

The signal sequence occupies residues 1–27; sequence MAVTDSLSRAATVLATVLLLSFGSVAA. Residues 28 to 368 lie on the Lumenal side of the membrane; that stretch reads SHIEDQAEQF…PKLKDWHPPG (341 aa). Ca(2+) is bound by residues aspartate 79, isoleucine 82, glutamate 118, and aspartate 120. The Proton donor role is filled by histidine 164. Cysteine 206 serves as the catalytic Nucleophile; acyl-thioester intermediate. Cysteine 206, serine 232, and serine 234 together coordinate a protein. The interval 231-236 is autoinhibitory loop; that stretch reads DSLSHQ. A disulfide bond links cysteine 275 and cysteine 280. Residues 369-385 traverse the membrane as a helical segment; the sequence is GFILGLWALIIMVFFKT. Topologically, residues 386–395 are cytoplasmic; the sequence is YGIKHMKFIF.

The protein belongs to the peptidase C13 family. Heteropentamer. Part of the GPI-anchor transamidase complex, consisting of PIGK, PIGT, PIGS, PIGU and GAA1. Interacts with GPAA1. Interacts with PIGT; this interaction, via a disulfide link, stabilizes the expression of GAA1 and PIGK and links them to PIGS. The disulfide bond between PIGK/GPI8 and PIGT is important for normal enzyme activity.

The protein localises to the endoplasmic reticulum membrane. The protein operates within glycolipid biosynthesis; glycosylphosphatidylinositol-anchor biosynthesis. Its activity is regulated as follows. In the absence of proproteins substrates, exists in an inactive state with a disrupted catalytic site by an autoinhibitory loop. The binding of proprotein substrates, particularly the CSP region, to GPI-T triggers concerted conformational changes that alleviate the inhibition by the autoinhibitory loop. Meanwhile, proprotein residues near the omega- site induce the formation of a catalytic cleft for catalysis, following which the products are released and GPI-T reverts to the inactive state. Catalytic subunit of the glycosylphosphatidylinositol-anchor (GPI-anchor) transamidase (GPI-T) complex that catalyzes the formation of the linkage between a proprotein and a GPI-anchor and participates in GPI anchored protein biosynthesis. Recognizes diverse proproteins at a C-terminal signal peptide (CSP) region that lacks consensus sequence and replaces it with a GPI-anchor via a transamidation reaction. Transamidation catalysis reaction follows a two-phase mechanism. In the acyl-enzyme phase, the carbonyl group of the proproteins's omega-site undergoes a nucleophilic attack forming an enzyme-substrate thioester bond. Followed by a general acid catalysis that allows CSP releasing, regenerating the carbonyl, and forming the acyl-enzyme intermediate. In the GPI-anchor attachment phase, the amino group of the GPI-anchor's ethanolamine phosphate, the one on third mannose (EtNP3), mediates a nucleophilic attack on the carbonyl of the acyl-enzyme intermediate, replacing the CSP, allowing GPI-anchor attachment to the omega-residue, therefore forming the product and freeing the enzyme. The protein is GPI-anchor transamidase of Homo sapiens (Human).